The following is a 199-amino-acid chain: NAD(P)H dehydrogenase (quinone) (199 aa).

A Flavodoxin-like domain is found at 4-190 (ILVLYYSMYG…AIARFQGEHV (187 aa)). FMN-binding positions include 10-15 (SMYGHI) and 79-81 (TRF). Residue Tyr12 participates in NAD(+) binding. Trp99 contacts substrate. FMN is bound by residues 114 to 119 (STGTGG) and His134.

This sequence belongs to the WrbA family. FMN serves as cofactor.

The enzyme catalyses a quinone + NADH + H(+) = a quinol + NAD(+). The catalysed reaction is a quinone + NADPH + H(+) = a quinol + NADP(+). The chain is NAD(P)H dehydrogenase (quinone) from Yersinia enterocolitica serotype O:8 / biotype 1B (strain NCTC 13174 / 8081).